Consider the following 505-residue polypeptide: Flagellin (505 aa).

Belongs to the bacterial flagellin family.

It is found in the secreted. Its subcellular location is the bacterial flagellum. Flagellin is the subunit protein which polymerizes to form the filaments of bacterial flagella. The protein is Flagellin (fliC) of Salmonella muenchen.